A 247-amino-acid chain; its full sequence is Eukaryotic translation initiation factor 6-1 (247 aa).

It belongs to the eIF-6 family. As to quaternary structure, monomer. Associates with the 60S ribosomal subunit.

It localises to the cytoplasm. The protein localises to the nucleus. The protein resides in the nucleolus. Functionally, binds to the 60S ribosomal subunit and prevents its association with the 40S ribosomal subunit to form the 80S initiation complex in the cytoplasm. May also be involved in ribosome biogenesis. The chain is Eukaryotic translation initiation factor 6-1 from Arabidopsis thaliana (Mouse-ear cress).